Here is a 603-residue protein sequence, read N- to C-terminus: Deuterosome assembly protein 1 (603 aa).

Coiled-coil stretches lie at residues 14–59, 85–197, 227–278, 336–399, and 454–480; these read CEAE…NAQT, MTQN…GKKQ, IEKL…ELQS, QDQP…KQLK, and HTSINKLEYENERLRNDLAKLRVNGKS. The residue at position 546 (S546) is a Phosphoserine. Residues 557-600 are a coiled coil; that stretch reads AAQHFLLEEEKRAKELEKLLNTHIDELQRHTEFTLNKYSKLKQN.

This sequence belongs to the CEP63 family. In terms of assembly, interacts with CEP152; the interaction is mutually exclusive with CEP63.

Its subcellular location is the cytoplasm. In terms of biological role, key structural component of the deuterosome, a structure that promotes de novo centriole amplification in multiciliated cells. Deuterosome-mediated centriole amplification occurs in terminally differentiated multiciliated cells and can generate more than 100 centrioles. Probably sufficient for the specification and formation of the deuterosome inner core. Interacts with CEP152 and recruits PLK4 to activate centriole biogenesis. In Macaca fascicularis (Crab-eating macaque), this protein is Deuterosome assembly protein 1.